The chain runs to 901 residues: Protein translocase subunit SecA (901 aa).

Residues Gln89, 107-111, and Asp502 contribute to the ATP site; that span reads GEGKT. The interval 838 to 883 is disordered; sequence YQQQQAETEAQMHPEHEEAEGGEVSGRVAGFDETDPTTWGNPSRND. 4 residues coordinate Zn(2+): Cys885, Cys887, Cys896, and His897.

Belongs to the SecA family. Monomer and homodimer. Part of the essential Sec protein translocation apparatus which comprises SecA, SecYEG and auxiliary proteins SecDF-YajC and YidC. Zn(2+) serves as cofactor.

The protein resides in the cell inner membrane. It localises to the cytoplasm. It carries out the reaction ATP + H2O + cellular proteinSide 1 = ADP + phosphate + cellular proteinSide 2.. Its function is as follows. Part of the Sec protein translocase complex. Interacts with the SecYEG preprotein conducting channel. Has a central role in coupling the hydrolysis of ATP to the transfer of proteins into and across the cell membrane, serving both as a receptor for the preprotein-SecB complex and as an ATP-driven molecular motor driving the stepwise translocation of polypeptide chains across the membrane. This Paracoccus denitrificans (strain Pd 1222) protein is Protein translocase subunit SecA.